The primary structure comprises 252 residues: ATP synthase subunit a (252 aa).

The next 7 membrane-spanning stretches (helical) occupy residues leucine 6–phenylalanine 26, leucine 31–glycine 51, phenylalanine 88–isoleucine 108, histidine 117–phenylalanine 137, phenylalanine 144–leucine 164, leucine 190–glutamine 212, and leucine 225–leucine 245.

It belongs to the ATPase A chain family. F-type ATPases have 2 components, CF(1) - the catalytic core - and CF(0) - the membrane proton channel. CF(1) has five subunits: alpha(3), beta(3), gamma(1), delta(1), epsilon(1). CF(0) has three main subunits: a, b and c.

The protein resides in the mitochondrion inner membrane. Its function is as follows. Mitochondrial membrane ATP synthase (F(1)F(0) ATP synthase or Complex V) produces ATP from ADP in the presence of a proton gradient across the membrane which is generated by electron transport complexes of the respiratory chain. F-type ATPases consist of two structural domains, F(1) - containing the extramembraneous catalytic core and F(0) - containing the membrane proton channel, linked together by a central stalk and a peripheral stalk. During catalysis, ATP synthesis in the catalytic domain of F(1) is coupled via a rotary mechanism of the central stalk subunits to proton translocation. Key component of the proton channel; it may play a direct role in the translocation of protons across the membrane. The sequence is that of ATP synthase subunit a (ATP6) from Marchantia polymorpha (Common liverwort).